The chain runs to 135 residues: Galectin-1 (135 aa).

The residue at position 2 (alanine 2) is an N-acetylalanine. Residues 4-135 (GLVASNLNLK…DFKIKCVAFD (132 aa)) form the Galectin domain. N6-acetyllysine is present on residues lysine 13 and lysine 29. Serine 30 bears the Phosphoserine mark. A beta-D-galactoside is bound by residues 45 to 49 (HFNPR), histidine 53, asparagine 62, and 69 to 72 (WGAE). Lysine 108 carries the N6-acetyllysine; alternate modification. N6-succinyllysine; alternate is present on lysine 108. Lysine 128 is modified (N6-acetyllysine).

Homodimer. Binds LGALS3BP. Interacts with CD2, CD3, CD4, CD6, CD7, CD43, ALCAM and CD45. Interacts with laminin (via poly-N-acetyllactosamine). Interacts with SUSD2. Interacts with cargo receptor TMED10; the interaction mediates the translocation from the cytoplasm into the ERGIC (endoplasmic reticulum-Golgi intermediate compartment) and thereby secretion. The N-terminus is blocked.

It localises to the secreted. The protein resides in the extracellular space. The protein localises to the extracellular matrix. Its subcellular location is the cytoplasm. Functionally, lectin that binds beta-galactoside and a wide array of complex carbohydrates. Plays a role in regulating apoptosis, cell proliferation and cell differentiation. Inhibits CD45 protein phosphatase activity and therefore the dephosphorylation of Lyn kinase. Strong inducer of T-cell apoptosis. The sequence is that of Galectin-1 from Bubalus bubalis (Domestic water buffalo).